Here is a 499-residue protein sequence, read N- to C-terminus: uncharacterized protein (499 aa).

FAD-binding positions include 6-35 (EAVI…VIER) and 272-282 (YRDGRIFLAGD).

Belongs to the PheA/TfdB FAD monooxygenase family. The cofactor is FAD.

This is an uncharacterized protein from Bacillus subtilis (strain 168).